Reading from the N-terminus, the 399-residue chain is Acetate kinase (399 aa).

N8 contacts Mg(2+). Position 15 (K15) interacts with ATP. R89 contributes to the substrate binding site. Catalysis depends on D146, which acts as the Proton donor/acceptor. Residues 206-210 (HVGNG), 283-285 (DMR), and 331-335 (GMGEN) each bind ATP. E383 contributes to the Mg(2+) binding site.

Belongs to the acetokinase family. Homodimer. The cofactor is Mg(2+). Mn(2+) serves as cofactor.

It is found in the cytoplasm. The enzyme catalyses acetate + ATP = acetyl phosphate + ADP. It participates in metabolic intermediate biosynthesis; acetyl-CoA biosynthesis; acetyl-CoA from acetate: step 1/2. Catalyzes the formation of acetyl phosphate from acetate and ATP. Can also catalyze the reverse reaction. The chain is Acetate kinase from Streptococcus equi subsp. zooepidemicus (strain H70).